The primary structure comprises 291 residues: GTPase Era (291 aa).

Residues Lys2 to Glu167 enclose the Era-type G domain. The tract at residues Gly10–Ser17 is G1. A GTP-binding site is contributed by Gly10 to Ser17. Positions Asn36 to Arg40 are G2. The segment at Asp57–Gly60 is G3. GTP contacts are provided by residues Asp57–Leu61 and Asn116–Asp119. The G4 stretch occupies residues Asn116–Asp119. Residues Tyr146–Ser148 form a G5 region. A KH type-2 domain is found at Tyr186–Lys274.

It belongs to the TRAFAC class TrmE-Era-EngA-EngB-Septin-like GTPase superfamily. Era GTPase family. Monomer.

The protein resides in the cytoplasm. It is found in the cell inner membrane. Its function is as follows. An essential GTPase that binds both GDP and GTP, with rapid nucleotide exchange. Plays a role in 16S rRNA processing and 30S ribosomal subunit biogenesis and possibly also in cell cycle regulation and energy metabolism. This chain is GTPase Era, found in Campylobacter jejuni (strain RM1221).